A 64-amino-acid polypeptide reads, in one-letter code: Large ribosomal subunit protein bL35 (64 aa).

Over residues 1–14 (MKNKTHKGTAKRVK) the composition is skewed to basic residues. The interval 1–29 (MKNKTHKGTAKRVKVTGSGKLVREQANRR) is disordered.

It belongs to the bacterial ribosomal protein bL35 family.

This is Large ribosomal subunit protein bL35 from Corynebacterium glutamicum (strain R).